The chain runs to 65 residues: Cold shock-like protein CspB (65 aa).

The CSD domain maps to 3–62 (GKVKWFNNEKGFGFIEMEGSEDVFVHFSAIQSDGYKALEEGQEVSFDITEGNRGPQAANV).

In terms of assembly, homodimer.

It is found in the cytoplasm. This chain is Cold shock-like protein CspB (cspB), found in Bacillus cereus.